The primary structure comprises 672 residues: Acetyl-coenzyme A synthetase (672 aa).

CoA-binding positions include 205 to 208 (RGGK) and threonine 325. Residues 401–403 (GEP), 425–430 (DTYWQT), aspartate 516, and arginine 531 each bind ATP. Serine 539 contributes to the CoA binding site. Arginine 542 contacts ATP. Arginine 600 is a CoA binding site.

The protein belongs to the ATP-dependent AMP-binding enzyme family.

It catalyses the reaction acetate + ATP + CoA = acetyl-CoA + AMP + diphosphate. This chain is Acetyl-coenzyme A synthetase (facA), found in Phycomyces blakesleeanus (strain ATCC 8743b / DSM 1359 / FGSC 10004 / NBRC 33097 / NRRL 1555).